The chain runs to 207 residues: Cytochrome c biogenesis ATP-binding export protein CcmA (207 aa).

Residues 6 to 207 enclose the ABC transporter domain; that stretch reads LCAEGLECIR…RGDCRSLNLS (202 aa). An ATP-binding site is contributed by 38–45; that stretch reads GANGAGKT.

Belongs to the ABC transporter superfamily. CcmA exporter (TC 3.A.1.107) family. In terms of assembly, the complex is composed of two ATP-binding proteins (CcmA) and two transmembrane proteins (CcmB).

It localises to the cell inner membrane. The enzyme catalyses heme b(in) + ATP + H2O = heme b(out) + ADP + phosphate + H(+). In terms of biological role, part of the ABC transporter complex CcmAB involved in the biogenesis of c-type cytochromes; once thought to export heme, this seems not to be the case, but its exact role is uncertain. Responsible for energy coupling to the transport system. The chain is Cytochrome c biogenesis ATP-binding export protein CcmA from Methylococcus capsulatus (strain ATCC 33009 / NCIMB 11132 / Bath).